A 79-amino-acid polypeptide reads, in one-letter code: Small ribosomal subunit protein bS18 (79 aa).

Belongs to the bacterial ribosomal protein bS18 family. As to quaternary structure, part of the 30S ribosomal subunit. Forms a tight heterodimer with protein bS6.

Binds as a heterodimer with protein bS6 to the central domain of the 16S rRNA, where it helps stabilize the platform of the 30S subunit. The protein is Small ribosomal subunit protein bS18 of Pseudarthrobacter chlorophenolicus (strain ATCC 700700 / DSM 12829 / CIP 107037 / JCM 12360 / KCTC 9906 / NCIMB 13794 / A6) (Arthrobacter chlorophenolicus).